The chain runs to 269 residues: uncharacterized protein (269 aa).

15-41 provides a ligand contact to NADP(+); the sequence is QKSVLITGCSSGIGLESALELKRQGFH. Position 146 (serine 146) interacts with substrate. Tyrosine 159 serves as the catalytic Proton acceptor.

Belongs to the short-chain dehydrogenases/reductases (SDR) family.

This is an uncharacterized protein from Escherichia coli O6:H1 (strain CFT073 / ATCC 700928 / UPEC).